The following is a 364-amino-acid chain: Phospho-N-acetylmuramoyl-pentapeptide-transferase (364 aa).

10 helical membrane-spanning segments follow: residues 3–23, 51–71, 80–100, 116–136, 154–174, 185–205, 229–249, 256–276, 281–301, and 341–361; these read AILFGGGLALLVSLLGTRVAI, TMGGVVIILATVVGYFGAKLI, ALLLLFLLVGTGLVGFVDDFI, MIGLTVVALVFGILSLSSWLE, IGWITLPTVVVLLLIWLIIAA, LDGLATGASVMVFGAYMFVNI, PLDLAVVAAAITGACFGFLWW, IFMGDTGSLALGGALAGLAIL, LLLIILGGLFVMETVSVMLQV, and FWIITGICVAAGLGVFYAEWV.

It belongs to the glycosyltransferase 4 family. MraY subfamily. Mg(2+) serves as cofactor.

It is found in the cell membrane. The enzyme catalyses UDP-N-acetyl-alpha-D-muramoyl-L-alanyl-gamma-D-glutamyl-meso-2,6-diaminopimeloyl-D-alanyl-D-alanine + di-trans,octa-cis-undecaprenyl phosphate = di-trans,octa-cis-undecaprenyl diphospho-N-acetyl-alpha-D-muramoyl-L-alanyl-D-glutamyl-meso-2,6-diaminopimeloyl-D-alanyl-D-alanine + UMP. Its pathway is cell wall biogenesis; peptidoglycan biosynthesis. Functionally, catalyzes the initial step of the lipid cycle reactions in the biosynthesis of the cell wall peptidoglycan: transfers peptidoglycan precursor phospho-MurNAc-pentapeptide from UDP-MurNAc-pentapeptide onto the lipid carrier undecaprenyl phosphate, yielding undecaprenyl-pyrophosphoryl-MurNAc-pentapeptide, known as lipid I. In Nocardioides sp. (strain ATCC BAA-499 / JS614), this protein is Phospho-N-acetylmuramoyl-pentapeptide-transferase.